Here is a 282-residue protein sequence, read N- to C-terminus: Aldo-keto reductase BQ2027_MB2996 (282 aa).

The active-site Proton donor is the Tyr57. Positions 197, 235, 237, 238, 239, 243, 246, 247, and 273 each coordinate NADPH.

Belongs to the aldo/keto reductase family.

The sequence is that of Aldo-keto reductase BQ2027_MB2996 from Mycobacterium bovis (strain ATCC BAA-935 / AF2122/97).